A 298-amino-acid chain; its full sequence is Ribosomal protein L11 methyltransferase (298 aa).

S-adenosyl-L-methionine contacts are provided by threonine 152, glycine 173, aspartate 195, and asparagine 234.

It belongs to the methyltransferase superfamily. PrmA family.

It localises to the cytoplasm. The catalysed reaction is L-lysyl-[protein] + 3 S-adenosyl-L-methionine = N(6),N(6),N(6)-trimethyl-L-lysyl-[protein] + 3 S-adenosyl-L-homocysteine + 3 H(+). Methylates ribosomal protein L11. This chain is Ribosomal protein L11 methyltransferase, found in Ralstonia nicotianae (strain ATCC BAA-1114 / GMI1000) (Ralstonia solanacearum).